Here is a 364-residue protein sequence, read N- to C-terminus: Selenide, water dikinase (364 aa).

The active site involves U25. A non-standard amino acid (selenocysteine) is located at residue U25. ATP-binding positions include K28, 46-48, D66, D89, and 141-143; these read GYD and GQT. Position 48 (D48) interacts with Mg(2+). D89 contacts Mg(2+). D244 is a Mg(2+) binding site.

The protein belongs to the selenophosphate synthase 1 family. Class II subfamily. As to quaternary structure, homodimer. Requires Mg(2+) as cofactor.

It carries out the reaction hydrogenselenide + ATP + H2O = selenophosphate + AMP + phosphate + 2 H(+). Synthesizes selenophosphate from selenide and ATP. The protein is Selenide, water dikinase (selD) of Dictyostelium discoideum (Social amoeba).